A 530-amino-acid polypeptide reads, in one-letter code: ATP synthase subunit alpha 3 (530 aa).

Position 174 to 181 (174 to 181) interacts with ATP; that stretch reads GDRATGKT. Residues 507-522 show a composition bias toward low complexity; sequence TASATAPPDPPAASAA. The segment at 507–530 is disordered; it reads TASATAPPDPPAASAAELPQPDSP.

Belongs to the ATPase alpha/beta chains family. In terms of assembly, F-type ATPases have 2 components, CF(1) - the catalytic core - and CF(0) - the membrane proton channel. CF(1) has five subunits: alpha(3), beta(3), gamma(1), delta(1), epsilon(1). CF(0) has three main subunits: a(1), b(2) and c(9-12). The alpha and beta chains form an alternating ring which encloses part of the gamma chain. CF(1) is attached to CF(0) by a central stalk formed by the gamma and epsilon chains, while a peripheral stalk is formed by the delta and b chains.

Its subcellular location is the cell inner membrane. The catalysed reaction is ATP + H2O + 4 H(+)(in) = ADP + phosphate + 5 H(+)(out). In terms of biological role, produces ATP from ADP in the presence of a proton gradient across the membrane. The alpha chain is a regulatory subunit. The protein is ATP synthase subunit alpha 3 of Paraburkholderia xenovorans (strain LB400).